Reading from the N-terminus, the 665-residue chain is Beta-galactosidase LacZ (665 aa).

Substrate is bound at residue arginine 110. Cysteine 114 contacts Zn(2+). Asparagine 148 provides a ligand contact to substrate. The Proton donor role is filled by glutamate 149. Zn(2+)-binding residues include cysteine 157, cysteine 159, and cysteine 162. Glutamate 303 (nucleophile) is an active-site residue. Residues tryptophan 311 and 351-354 contribute to the substrate site; that span reads EKFH.

The protein belongs to the glycosyl hydrolase 42 family.

It carries out the reaction Hydrolysis of terminal non-reducing beta-D-galactose residues in beta-D-galactosides.. This is Beta-galactosidase LacZ from Heyndrickxia coagulans (Weizmannia coagulans).